The sequence spans 185 residues: Prenylated Rab acceptor protein 1 (185 aa).

The Cytoplasmic segment spans residues 1–78; the sequence is MAAQKDQQKD…RNVEYYQSNY (78 aa). The interval 30–54 is required for interaction with prenylated RAB3A and VAMP2; sequence AGREWLERRRATIRPWGTFVDQQRF. A run of 2 helical transmembrane segments spans residues 79–94 and 95–112; these read VFVFLGLILYCVVTSP and MLLVALAVFFGACYILYL. The Cytoplasmic segment spans residues 113-131; that stretch reads RTLQSKLVLFGREVSPAHQ. 2 helical membrane passes run 132–148 and 149–165; these read YALAGGVSFPFFWLAGA and GSAVFWVLGATLVLIGS. Residues 165 to 185 are required for interaction with GDI1; sequence SHAAFHQMEPADGEELQMEPV. The Cytoplasmic segment spans residues 166 to 185; sequence HAAFHQMEPADGEELQMEPV. A required for interaction with prenylated RAB3A and VAMP2 region spans residues 175–185; sequence ADGEELQMEPV. The interval 175–185 is homodimerization; that stretch reads ADGEELQMEPV.

It belongs to the PRA1 family. As to quaternary structure, homodimer. Interacts with VAMP2 (synaptobrevin-2), GDI1, NRDG1 and PCLO. Interacts with prenylated Rab proteins (including RAB5 and RAB6), and with the members of the Ras superfamily HRAS, RHOA, TC21, and RAP1A.

It is found in the cell membrane. The protein resides in the cytoplasm. It localises to the golgi apparatus. Its subcellular location is the cytoplasmic vesicle. The protein localises to the secretory vesicle. It is found in the synaptic vesicle. In terms of biological role, general Rab protein regulator required for vesicle formation from the Golgi complex. May control vesicle docking and fusion by mediating the action of Rab GTPases to the SNARE complexes. In addition it inhibits the removal of Rab GTPases from the membrane by GDI1. The chain is Prenylated Rab acceptor protein 1 (Rabac1) from Mus musculus (Mouse).